A 156-amino-acid chain; its full sequence is dCTP deaminase (156 aa).

DCTP contacts are provided by residues 79–84, Asp-95, Gln-124, and Tyr-138; that span reads RSTFAR.

This sequence belongs to the dCTP deaminase family. As to quaternary structure, homotrimer.

It catalyses the reaction dCTP + H2O + H(+) = dUTP + NH4(+). The protein operates within pyrimidine metabolism; dUMP biosynthesis; dUMP from dCTP (dUTP route): step 1/2. Its function is as follows. Catalyzes the deamination of dCTP to dUTP. The protein is dCTP deaminase of Thermococcus sibiricus (strain DSM 12597 / MM 739).